The chain runs to 218 residues: Ribonuclease HII (218 aa).

The RNase H type-2 domain occupies 24–218 (ESIAGVDEVG…KLFAVNGSLT (195 aa)). A divalent metal cation is bound by residues Asp30, Glu31, and Asp126.

It belongs to the RNase HII family. It depends on Mn(2+) as a cofactor. The cofactor is Mg(2+).

It localises to the cytoplasm. The enzyme catalyses Endonucleolytic cleavage to 5'-phosphomonoester.. Functionally, endonuclease that specifically degrades the RNA of RNA-DNA hybrids. The protein is Ribonuclease HII of Prochlorococcus marinus (strain MIT 9313).